We begin with the raw amino-acid sequence, 256 residues long: Hydroxyacylglutathione hydrolase (256 aa).

Residues histidine 55, histidine 57, aspartate 59, histidine 60, histidine 113, aspartate 130, and histidine 168 each contribute to the Zn(2+) site.

This sequence belongs to the metallo-beta-lactamase superfamily. Glyoxalase II family. As to quaternary structure, monomer. The cofactor is Zn(2+).

The enzyme catalyses an S-(2-hydroxyacyl)glutathione + H2O = a 2-hydroxy carboxylate + glutathione + H(+). Its pathway is secondary metabolite metabolism; methylglyoxal degradation; (R)-lactate from methylglyoxal: step 2/2. In terms of biological role, thiolesterase that catalyzes the hydrolysis of S-D-lactoyl-glutathione to form glutathione and D-lactic acid. The polypeptide is Hydroxyacylglutathione hydrolase (Alkalilimnicola ehrlichii (strain ATCC BAA-1101 / DSM 17681 / MLHE-1)).